The chain runs to 112 residues: CLAVATA3/ESR (CLE)-related protein 44 (112 aa).

The N-terminal stretch at 1 to 39 (MATTIDQTSIKSLHFHQVIRLIITIIFLAFLFLIGPTSS) is a signal peptide. The segment at 41 to 112 (NHHLHESSSK…VPSGPNPISN (72 aa)) is disordered. The segment covering 62–71 (QPSTPSSSTM) has biased composition (polar residues). Residues Pro-104 and Pro-107 each carry the hydroxyproline modification. Residue Pro-107 is glycosylated (O-linked (Ara...) hydroxyproline).

Belongs to the CLV3/ESR signal peptide family. In terms of assembly, interacts specifically with the leucine-rich repeat receptor-like protein kinase TDR, especially in the presence of SERK2. The O-glycosylation (arabinosylation) of the hydroxyproline Pro-107 enhances binding affinity of the CLE44p peptide for its receptor. As to expression, mostly expressed in flowers and leaves. Widely expressed along the vascular strands. In roots and hypocotyls, present in endodermal cells as well as cells in the phloem and the adjacent pericycle.

The protein localises to the secreted. It localises to the extracellular space. Its function is as follows. Extracellular signal peptide that regulates cell fate. May act with TDR as a ligand-receptor pair in a signal transduction pathway that represses tracheary element differentiation but promotes the formation of procambial cells adjacent to phloem cells in the veins. Regulates the transition of protophloem cells from proliferation to differentiation, thus impinging on postembryonic growth capacity of the root meristem; this signaling pathway requires CRN and CLV2. The sequence is that of CLAVATA3/ESR (CLE)-related protein 44 from Arabidopsis thaliana (Mouse-ear cress).